The chain runs to 77 residues: uncharacterized protein (77 aa).

This is an uncharacterized protein from Escherichia phage 186 (Bacteriophage 186).